We begin with the raw amino-acid sequence, 81 residues long: Large ribosomal subunit protein bL31 (81 aa).

The Zn(2+) site is built by Cys-16, Cys-18, Cys-36, and Cys-39.

Belongs to the bacterial ribosomal protein bL31 family. Type A subfamily. In terms of assembly, part of the 50S ribosomal subunit. It depends on Zn(2+) as a cofactor.

Its function is as follows. Binds the 23S rRNA. This chain is Large ribosomal subunit protein bL31, found in Rhodopirellula baltica (strain DSM 10527 / NCIMB 13988 / SH1).